A 510-amino-acid polypeptide reads, in one-letter code: RanBP-type and C3HC4-type zinc finger-containing protein 1 (510 aa).

N-acetylmethionine is present on Met1. An interaction with IRF3 region spans residues 1-220 (MDEKTKKAEE…PGCEMCCRAR (220 aa)). Residues 1–270 (MDEKTKKAEE…NYLQHVQLDQ (270 aa)) form an interaction with TAB2 region. Ser50 bears the Phosphoserine mark. One can recognise a Ubiquitin-like domain in the interval 55–119 (IRLWVSVEDA…DQETLHSHGV (65 aa)). An interaction with RNF31 region spans residues 69–131 (VTIWLTVRPD…NGDSAYLYLL (63 aa)). The interval 160 to 192 (LTLQPRGPLEPGPPKPGVPQEPGRGQPDAVPEP) is disordered. Over residues 167-178 (PLEPGPPKPGVP) the composition is skewed to pro residues. The RanBP2-type zinc finger occupies 193-222 (PPVGWQCPGCTFINKPTRPGCEMCCRARPE). The stretch at 233–261 (DEEERARLAGEEEALRQYQQRKQQQQEGN) forms a coiled coil. Residues 278–506 (EPAECPVCYS…VNGIPCHPSC (229 aa)) are TRIAD supradomain. Zn(2+) contacts are provided by Cys282, Cys285, Cys300, His302, Cys305, Cys308, and Cys323. The RING-type 1 zinc finger occupies 282-332 (CPVCYSVLAPGEAVVLRECLHTFCRECLQGTIRNSQEAEVSCPFIDNTYSC). At Tyr330 the chain carries Phosphotyrosine. 11 residues coordinate Zn(2+): Cys332, Cys371, Cys376, Cys391, Cys394, Cys399, Cys402, His406, Cys411, Cys447, and Cys450. The IBR-type zinc finger occupies 351 to 411 (QRFLDLGISI…CKAIHEQMNC (61 aa)). The RING-type 2; atypical zinc finger occupies 447 to 476 (CPQCQIVVQKKDGCDWIRCTVCHTEICWVT). Residue Cys460 is part of the active site. Cys465 and Cys468 together coordinate Zn(2+).

It belongs to the RBR family. Component of the LUBAC complex (linear ubiquitin chain assembly complex) which consists of SHARPIN, RBCK1 and RNF31. LUBAC has a MW of approximately 600 kDa suggesting a heteromultimeric assembly of its subunits. Interacts with beta-I-type (PRKCB1) and zeta-type protein kinase C (PRKCZ). Interacts with UBE2L3. Interacts with PRKCH. Associates with the TNF-R1 signaling complex (TNF-RSC) in a stimulation-dependent manner. Interacts with EYA1, TAB2, TAB3, MAP3K7 TRAF6 and RIPK1. Interacts with IRF3. In terms of assembly, interacts with IREB2 only in iron-rich conditions. As to quaternary structure, (Microbial infection) Interacts with hepatitis B virus/HBV protein HBx; this interaction is required to activate transcription of the viral genome. Auto-ubiquitinated. Auto-ubiquitination leads to degradation by the proteasome. In terms of processing, phosphorylated. In vitro, phosphorylation inhibits auto-ubiquitination activity. Post-translationally, (Microbial infection) Ubiquitinated by S.flexneri E3 ubiquitin-protein ligases IpaH1.4 and IpaH2.5, leading to its degradation by the proteasome, thereby preventing formation of the bacterial ubiquitin coat and activation of innate immunity.

The enzyme catalyses [E2 ubiquitin-conjugating enzyme]-S-ubiquitinyl-L-cysteine + [acceptor protein]-L-lysine = [E2 ubiquitin-conjugating enzyme]-L-cysteine + [acceptor protein]-N(6)-ubiquitinyl-L-lysine.. Its pathway is protein modification; protein ubiquitination. Its function is as follows. E3 ubiquitin-protein ligase, which accepts ubiquitin from specific E2 ubiquitin-conjugating enzymes, such as UBE2L3/UBCM4, and then transfers it to substrates. Functions as an E3 ligase for oxidized IREB2 and both heme and oxygen are necessary for IREB2 ubiquitination. Promotes ubiquitination of TAB2 and IRF3 and their degradation by the proteasome. Component of the LUBAC complex which conjugates linear ('Met-1'-linked) polyubiquitin chains to substrates and plays a key role in NF-kappa-B activation and regulation of inflammation. LUBAC conjugates linear polyubiquitin to IKBKG and RIPK1 and is involved in activation of the canonical NF-kappa-B and the JNK signaling pathways. Linear ubiquitination mediated by the LUBAC complex interferes with TNF-induced cell death and thereby prevents inflammation. LUBAC is recruited to the TNF-R1 signaling complex (TNF-RSC) following polyubiquitination of TNF-RSC components by BIRC2 and/or BIRC3 and to conjugate linear polyubiquitin to IKBKG and possibly other components contributing to the stability of the complex. The LUBAC complex is also involved in innate immunity by conjugating linear polyubiquitin chains at the surface of bacteria invading the cytosol to form the ubiquitin coat surrounding bacteria. LUBAC is not able to initiate formation of the bacterial ubiquitin coat, and can only promote formation of linear polyubiquitins on pre-existing ubiquitin. The bacterial ubiquitin coat acts as an 'eat-me' signal for xenophagy and promotes NF-kappa-B activation. Together with OTULIN, the LUBAC complex regulates the canonical Wnt signaling during angiogenesis. Binds polyubiquitin of different linkage types. This Homo sapiens (Human) protein is RanBP-type and C3HC4-type zinc finger-containing protein 1 (RBCK1).